The sequence spans 422 residues: Proline--tRNA ligase (422 aa).

Belongs to the class-II aminoacyl-tRNA synthetase family. ProS type 2 subfamily. Homodimer.

The protein localises to the cytoplasm. The catalysed reaction is tRNA(Pro) + L-proline + ATP = L-prolyl-tRNA(Pro) + AMP + diphosphate. Catalyzes the attachment of proline to tRNA(Pro) in a two-step reaction: proline is first activated by ATP to form Pro-AMP and then transferred to the acceptor end of tRNA(Pro). The protein is Proline--tRNA ligase of Wolbachia sp. subsp. Drosophila simulans (strain wRi).